A 227-amino-acid polypeptide reads, in one-letter code: MHSSVITFPGSNCDRDMDVALKKFGFKNKMVWHDDVELPKSDLVVLPGGFSYGDYLRCGSMASKSKIMKSVLNFAQGGGKVMGVCNGFQILVESGLLPGVLLRNKYLEFICKNVFVKANNKDNSYFKDDKKNIYEFHIAHNEGNYFCSNDQIKEINDNNQIALFYSDENGNVNEQSNPNGSLQNIAGVFNKQKNVLGMMPHPERMIDPALSGEDGSIFFQNLINNLK.

In terms of domain architecture, Glutamine amidotransferase type-1 spans 3-227 (SSVITFPGSN…FFQNLINNLK (225 aa)). C85 acts as the Nucleophile in catalysis. Residues H201 and E203 contribute to the active site.

In terms of assembly, part of the FGAM synthase complex composed of 1 PurL, 1 PurQ and 2 PurS subunits.

The protein localises to the cytoplasm. The enzyme catalyses N(2)-formyl-N(1)-(5-phospho-beta-D-ribosyl)glycinamide + L-glutamine + ATP + H2O = 2-formamido-N(1)-(5-O-phospho-beta-D-ribosyl)acetamidine + L-glutamate + ADP + phosphate + H(+). It catalyses the reaction L-glutamine + H2O = L-glutamate + NH4(+). It participates in purine metabolism; IMP biosynthesis via de novo pathway; 5-amino-1-(5-phospho-D-ribosyl)imidazole from N(2)-formyl-N(1)-(5-phospho-D-ribosyl)glycinamide: step 1/2. Part of the phosphoribosylformylglycinamidine synthase complex involved in the purines biosynthetic pathway. Catalyzes the ATP-dependent conversion of formylglycinamide ribonucleotide (FGAR) and glutamine to yield formylglycinamidine ribonucleotide (FGAM) and glutamate. The FGAM synthase complex is composed of three subunits. PurQ produces an ammonia molecule by converting glutamine to glutamate. PurL transfers the ammonia molecule to FGAR to form FGAM in an ATP-dependent manner. PurS interacts with PurQ and PurL and is thought to assist in the transfer of the ammonia molecule from PurQ to PurL. The polypeptide is Phosphoribosylformylglycinamidine synthase subunit PurQ (Pelagibacter ubique (strain HTCC1062)).